Reading from the N-terminus, the 248-residue chain is Probable transcriptional regulatory protein Plav_2114 (248 aa).

Belongs to the TACO1 family.

The protein localises to the cytoplasm. In Parvibaculum lavamentivorans (strain DS-1 / DSM 13023 / NCIMB 13966), this protein is Probable transcriptional regulatory protein Plav_2114.